We begin with the raw amino-acid sequence, 354 residues long: Nicotinate-nucleotide--dimethylbenzimidazole phosphoribosyltransferase (354 aa).

Residue glutamate 319 is the Proton acceptor of the active site.

The protein belongs to the CobT family.

It carries out the reaction 5,6-dimethylbenzimidazole + nicotinate beta-D-ribonucleotide = alpha-ribazole 5'-phosphate + nicotinate + H(+). The protein operates within nucleoside biosynthesis; alpha-ribazole biosynthesis; alpha-ribazole from 5,6-dimethylbenzimidazole: step 1/2. Its function is as follows. Catalyzes the synthesis of alpha-ribazole-5'-phosphate from nicotinate mononucleotide (NAMN) and 5,6-dimethylbenzimidazole (DMB). This chain is Nicotinate-nucleotide--dimethylbenzimidazole phosphoribosyltransferase, found in Pelodictyon phaeoclathratiforme (strain DSM 5477 / BU-1).